A 196-amino-acid polypeptide reads, in one-letter code: Imidazoleglycerol-phosphate dehydratase (196 aa).

Belongs to the imidazoleglycerol-phosphate dehydratase family.

It localises to the cytoplasm. It carries out the reaction D-erythro-1-(imidazol-4-yl)glycerol 3-phosphate = 3-(imidazol-4-yl)-2-oxopropyl phosphate + H2O. Its pathway is amino-acid biosynthesis; L-histidine biosynthesis; L-histidine from 5-phospho-alpha-D-ribose 1-diphosphate: step 6/9. The sequence is that of Imidazoleglycerol-phosphate dehydratase from Solidesulfovibrio magneticus (strain ATCC 700980 / DSM 13731 / RS-1) (Desulfovibrio magneticus).